Reading from the N-terminus, the 513-residue chain is MNTVVVLDYGSQYTQLIVRRVREKGYYAELLPWDASKEEVQNLNPAAIILSGGPASVFEKDAPFVPDYILELNIPILGICYGLQSLVHKFGGIVEKSPKREFGHAVLKVKDDPLFEGLPKEFDVWMSHSDRVEKLPEGFLVIGESENSPYAAIRNKDGTIYGVQFHPEVTHTSFGDKILENFVSKVAKMEKNWKMTDFIEEKINEIRKVVGNDKVILGLSGGVDSSVVALLLDKAIGKNSIPIFVDTGLLRLNERQEVEENFRKLGIDIVVVDAKERFLSNLKGVEDPEEKRKIIGHTFIDVFYEASMKLLEKHGNIKYLAQGTLYPDIIESKVSERKAAAKIKTHHNVGGLPEKLPFKIIEPFRYLFKDEVRKIGKILGLPDEMINRHPFPGPGLAVRIIGEVTNEAIKILQHADHIFIEELKKNDLYDKVWQAFAVFLPIRSVGVMGDYRTYDNVIALRAVNSFDGMTADWSKLPHEFLNKVAKRIVNEVDGVNRVVYDITSKPPATIEWE.

Residues 3-192 (TVVVLDYGSQ…VSKVAKMEKN (190 aa)) enclose the Glutamine amidotransferase type-1 domain. Catalysis depends on cysteine 80, which acts as the Nucleophile. Active-site residues include histidine 166 and glutamate 168. The GMPS ATP-PPase domain maps to 193 to 388 (WKMTDFIEEK…LGLPDEMINR (196 aa)). 220–226 (SGGVDSS) is a binding site for ATP.

Homodimer.

The catalysed reaction is XMP + L-glutamine + ATP + H2O = GMP + L-glutamate + AMP + diphosphate + 2 H(+). Its pathway is purine metabolism; GMP biosynthesis; GMP from XMP (L-Gln route): step 1/1. In terms of biological role, catalyzes the synthesis of GMP from XMP. This chain is GMP synthase [glutamine-hydrolyzing], found in Thermosipho africanus (strain TCF52B).